Here is a 392-residue protein sequence, read N- to C-terminus: Alanine--glyoxylate aminotransferase (392 aa).

At Thr9 the chain carries Phosphothreonine. Lys209 bears the N6-(pyridoxal phosphate)lysine mark. Lys225 is subject to N6-acetyllysine; alternate. N6-succinyllysine; alternate is present on Lys225. N6-acetyllysine is present on residues Lys234 and Lys312. Arg360 contacts substrate.

It belongs to the class-V pyridoxal-phosphate-dependent aminotransferase family. Homodimer. It depends on pyridoxal 5'-phosphate as a cofactor. Liver.

It is found in the peroxisome. The catalysed reaction is L-serine + pyruvate = 3-hydroxypyruvate + L-alanine. It catalyses the reaction glyoxylate + L-alanine = glycine + pyruvate. With respect to regulation, alanine--glyoxylate aminotransferase activity is inhibited by 1 mM (aminooxy)acetic acid by 97.5%. Its function is as follows. Peroxisomal aminotransferase that catalyzes the transamination of glyoxylate to glycine and contributes to the glyoxylate detoxification. Also catalyzes the transamination between L-serine and pyruvate and contributes to gluconeogenesis from the L-serine metabolism. This is Alanine--glyoxylate aminotransferase from Homo sapiens (Human).